We begin with the raw amino-acid sequence, 445 residues long: Ribosomal protein uS12 methylthiotransferase RimO (445 aa).

One can recognise an MTTase N-terminal domain in the interval 13–123 (PRVGFVSLGC…VMAAIHHHLP (111 aa)). [4Fe-4S] cluster contacts are provided by Cys22, Cys58, Cys87, Cys154, Cys158, and Cys161. The region spanning 140 to 377 (LTPKHYAYLK…MQQQEIISKQ (238 aa)) is the Radical SAM core domain. In terms of domain architecture, TRAM spans 380–445 (AVKKGQQLRV…DIHDLWTEKI (66 aa)).

It belongs to the methylthiotransferase family. RimO subfamily. Requires [4Fe-4S] cluster as cofactor.

The protein resides in the cytoplasm. It carries out the reaction L-aspartate(89)-[ribosomal protein uS12]-hydrogen + (sulfur carrier)-SH + AH2 + 2 S-adenosyl-L-methionine = 3-methylsulfanyl-L-aspartate(89)-[ribosomal protein uS12]-hydrogen + (sulfur carrier)-H + 5'-deoxyadenosine + L-methionine + A + S-adenosyl-L-homocysteine + 2 H(+). Catalyzes the methylthiolation of an aspartic acid residue of ribosomal protein uS12. The sequence is that of Ribosomal protein uS12 methylthiotransferase RimO from Nitrosomonas eutropha (strain DSM 101675 / C91 / Nm57).